The following is a 501-amino-acid chain: Lysine--tRNA ligase (501 aa).

Residues Glu-402 and Glu-409 each contribute to the Mg(2+) site.

It belongs to the class-II aminoacyl-tRNA synthetase family. In terms of assembly, homodimer. Mg(2+) serves as cofactor.

The protein localises to the cytoplasm. The enzyme catalyses tRNA(Lys) + L-lysine + ATP = L-lysyl-tRNA(Lys) + AMP + diphosphate. This Helicobacter pylori (strain P12) protein is Lysine--tRNA ligase.